Here is a 297-residue protein sequence, read N- to C-terminus: Acetylglutamate kinase (297 aa).

Substrate is bound by residues 68 to 69, Arg-90, and Asn-195; that span reads GG.

This sequence belongs to the acetylglutamate kinase family. ArgB subfamily.

The protein resides in the cytoplasm. The enzyme catalyses N-acetyl-L-glutamate + ATP = N-acetyl-L-glutamyl 5-phosphate + ADP. Its pathway is amino-acid biosynthesis; L-arginine biosynthesis; N(2)-acetyl-L-ornithine from L-glutamate: step 2/4. Functionally, catalyzes the ATP-dependent phosphorylation of N-acetyl-L-glutamate. The polypeptide is Acetylglutamate kinase (Chelativorans sp. (strain BNC1)).